The sequence spans 337 residues: F420-dependent glucose-6-phosphate dehydrogenase 2 (337 aa).

Residue D40 participates in coenzyme F420-(gamma-Glu)n binding. Catalysis depends on H41, which acts as the Proton donor. Coenzyme F420-(gamma-Glu)n contacts are provided by residues T77 and 108–109; that span reads TG. Residue E110 is the Proton acceptor of the active site. Coenzyme F420-(gamma-Glu)n contacts are provided by residues N113, 178 to 179, and 181 to 182; these read GG and VV. Substrate-binding residues include T196, K199, K260, and R284.

It belongs to the F420-dependent glucose-6-phosphate dehydrogenase family. As to quaternary structure, homodimer.

The catalysed reaction is oxidized coenzyme F420-(gamma-L-Glu)(n) + D-glucose 6-phosphate + H(+) = 6-phospho-D-glucono-1,5-lactone + reduced coenzyme F420-(gamma-L-Glu)(n). Catalyzes the coenzyme F420-dependent oxidation of glucose 6-phosphate (G6P) to 6-phosphogluconolactone. This is F420-dependent glucose-6-phosphate dehydrogenase 2 from Rhodococcus jostii (strain RHA1).